Consider the following 295-residue polypeptide: HTH-type transcriptional regulator TfdS (295 aa).

Residues 1–58 (MEFRQLRYFVAAAEEGNVGAAARRLHISQPPVTRQIHALEQHLGVLLFERSARGVQLT) enclose the HTH lysR-type domain. Positions 18 to 37 (VGAAARRLHISQPPVTRQIH) form a DNA-binding region, H-T-H motif.

It belongs to the LysR transcriptional regulatory family.

It localises to the cytoplasm. In terms of biological role, involved in the regulation of 3-chlorocatechol degradation. Transcriptional regulator of tfdB expression. Acts as a repressor in the absence of its effector (either 2-cis-chlorodiene lactone or chloromaleylacetate) but acts as an activator when its effector is present. The protein is HTH-type transcriptional regulator TfdS (tfdS) of Cupriavidus pinatubonensis (strain JMP 134 / LMG 1197) (Cupriavidus necator (strain JMP 134)).